Here is a 122-residue protein sequence, read N- to C-terminus: Small ribosomal subunit protein uS13 (122 aa).

The disordered stretch occupies residues 98-122; sequence VRGQRTHTNARTRKGPAKAIAGKKK.

It belongs to the universal ribosomal protein uS13 family. Part of the 30S ribosomal subunit. Forms a loose heterodimer with protein S19. Forms two bridges to the 50S subunit in the 70S ribosome.

Located at the top of the head of the 30S subunit, it contacts several helices of the 16S rRNA. In the 70S ribosome it contacts the 23S rRNA (bridge B1a) and protein L5 of the 50S subunit (bridge B1b), connecting the 2 subunits; these bridges are implicated in subunit movement. Contacts the tRNAs in the A and P-sites. This Ruegeria sp. (strain TM1040) (Silicibacter sp.) protein is Small ribosomal subunit protein uS13.